We begin with the raw amino-acid sequence, 798 residues long: Probable DEAD-box ATP-dependent RNA helicase 48 (798 aa).

Disordered regions lie at residues 76–100 (KMWG…MSPK), 117–148 (DFWN…NSPI), and 236–257 (FRKN…GKMI). The segment covering 132–148 (GSRSGSDSIDSTSNSPI) has biased composition (low complexity). Positions 242-252 (STEEDSDEEGD) are enriched in acidic residues. A Q motif motif is present at residues 328 to 356 (KRFDESCISPLTLKALSASGILKMTRVQD). The 185-residue stretch at 359–543 (LSECLDGKDA…QLVLKRDHSY (185 aa)) folds into the Helicase ATP-binding domain. 372–379 (AKTGTGKS) is a binding site for ATP. Positions 491–494 (DEAD) match the DEAD box motif. The region spanning 577-726 (LLKEHINNTP…SIVKHQVDQS (150 aa)) is the Helicase C-terminal domain.

The protein belongs to the DEAD box helicase family.

It catalyses the reaction ATP + H2O = ADP + phosphate + H(+). This Arabidopsis thaliana (Mouse-ear cress) protein is Probable DEAD-box ATP-dependent RNA helicase 48 (RH48).